Here is a 508-residue protein sequence, read N- to C-terminus: Photosystem II CP47 reaction center protein (508 aa).

The next 6 membrane-spanning stretches (helical) occupy residues 21–36, 101–115, 140–156, 203–218, 237–252, and 457–472; these read SVHIMHTALVSGWAGS, IVFSGLCFLAAIWHW, GIHLFLSGVACFGFGAF, IAAGTLGILAGLFHLS, VLSSSIAAVFFAAFVV, and TFALLFFFGHIWHGAR.

It belongs to the PsbB/PsbC family. PsbB subfamily. In terms of assembly, PSII is composed of 1 copy each of membrane proteins PsbA, PsbB, PsbC, PsbD, PsbE, PsbF, PsbH, PsbI, PsbJ, PsbK, PsbL, PsbM, PsbT, PsbX, PsbY, PsbZ, Psb30/Ycf12, at least 3 peripheral proteins of the oxygen-evolving complex and a large number of cofactors. It forms dimeric complexes. Requires Binds multiple chlorophylls. PSII binds additional chlorophylls, carotenoids and specific lipids. as cofactor.

It localises to the plastid. The protein resides in the chloroplast thylakoid membrane. Functionally, one of the components of the core complex of photosystem II (PSII). It binds chlorophyll and helps catalyze the primary light-induced photochemical processes of PSII. PSII is a light-driven water:plastoquinone oxidoreductase, using light energy to abstract electrons from H(2)O, generating O(2) and a proton gradient subsequently used for ATP formation. This Calycanthus floridus var. glaucus (Eastern sweetshrub) protein is Photosystem II CP47 reaction center protein.